The primary structure comprises 445 residues: Putative H/ACA ribonucleoprotein complex subunit 4 (445 aa).

Residues 1 to 32 (MGKKDKRSKLEGDELAEAQQKGSFQLPSSNET) form a disordered region. Residues 20–32 (QKGSFQLPSSNET) are compositionally biased toward polar residues. The Nucleophile role is filled by aspartate 113. In terms of domain architecture, PUA spans 284-359 (HKRVVVKDSC…IVAKSKRVIM (76 aa)). The tract at residues 407-445 (TDKVKKEQEDKEDEEEEEAPKKKSKKAAKKEVSSSSDSE) is disordered.

This sequence belongs to the pseudouridine synthase TruB family. In terms of assembly, component of the small nucleolar ribonucleoprotein particle containing H/ACA-type snoRNAs (H/ACA snoRNPs).

It is found in the nucleus. Its subcellular location is the nucleolus. It catalyses the reaction a uridine in RNA = a pseudouridine in RNA. In terms of biological role, plays a central role in ribosomal RNA processing. Probable catalytic subunit of H/ACA small nucleolar ribonucleoprotein (H/ACA snoRNP) complex, which catalyzes pseudouridylation of rRNA. This involves the isomerization of uridine such that the ribose is subsequently attached to C5, instead of the normal N1. Pseudouridine ('psi') residues may serve to stabilize the conformation of rRNAs. The sequence is that of Putative H/ACA ribonucleoprotein complex subunit 4 from Caenorhabditis briggsae.